The following is a 279-amino-acid chain: Large ribosomal subunit protein uL24m (279 aa).

The transit peptide at 1-31 (MRDLRKLIPRLRGPGTNVLKMKKPLPLHMRT) directs the protein to the mitochondrion. Over residues 34–51 (REHLNKSDPTVKDDKSAK) the composition is skewed to basic and acidic residues. Residues 34-56 (REHLNKSDPTVKDDKSAKPELPF) form a disordered region. Residues 70–100 (KGDYVYVHQGPLKGKWGRVVETNKYTNGITI) enclose the KOW domain. The interval 185 to 204 (PRPKTEDKPKDPEGKLDTKN) is disordered. The span at 187 to 202 (PKTEDKPKDPEGKLDT) shows a compositional bias: basic and acidic residues.

The protein belongs to the universal ribosomal protein uL24 family. Component of the mitochondrial large ribosomal subunit (mt-LSU). Mature yeast 74S mitochondrial ribosomes consist of a small (37S) and a large (54S) subunit. The 37S small subunit contains a 15S ribosomal RNA (15S mt-rRNA) and at least 32 different proteins. The 54S large subunit contains a 21S rRNA (21S mt-rRNA) and at least 45 different proteins. uL24m forms the wall of the exit tunnel.

The protein resides in the mitochondrion. Functionally, component of the mitochondrial ribosome (mitoribosome), a dedicated translation machinery responsible for the synthesis of mitochondrial genome-encoded proteins, including at least some of the essential transmembrane subunits of the mitochondrial respiratory chain. The mitoribosomes are attached to the mitochondrial inner membrane and translation products are cotranslationally integrated into the membrane. This chain is Large ribosomal subunit protein uL24m (mrpl40), found in Schizosaccharomyces pombe (strain 972 / ATCC 24843) (Fission yeast).